The sequence spans 488 residues: N-succinylglutamate 5-semialdehyde dehydrogenase 2 (488 aa).

221–226 serves as a coordination point for NAD(+); the sequence is GSSNTG. Residues glutamate 244 and cysteine 278 contribute to the active site.

Belongs to the aldehyde dehydrogenase family. AstD subfamily.

The enzyme catalyses N-succinyl-L-glutamate 5-semialdehyde + NAD(+) + H2O = N-succinyl-L-glutamate + NADH + 2 H(+). It participates in amino-acid degradation; L-arginine degradation via AST pathway; L-glutamate and succinate from L-arginine: step 4/5. Catalyzes the NAD-dependent reduction of succinylglutamate semialdehyde into succinylglutamate. In Pseudoalteromonas translucida (strain TAC 125), this protein is N-succinylglutamate 5-semialdehyde dehydrogenase 2.